Reading from the N-terminus, the 224-residue chain is dTDP-fucosamine acetyltransferase (224 aa).

An N-acetyltransferase domain is found at 94 to 224 (PALRQLASAA…VESTAYWLYR (131 aa)). Acetyl-CoA contacts are provided by residues 168–174 (LAGRGAG), Asn201, and Arg207. Tyr208 (proton donor) is an active-site residue.

This sequence belongs to the WecD family. As to quaternary structure, homodimer.

The catalysed reaction is dTDP-4-amino-4,6-dideoxy-alpha-D-galactose + acetyl-CoA = dTDP-4-acetamido-4,6-dideoxy-alpha-D-galactose + CoA + H(+). It functions in the pathway bacterial outer membrane biogenesis; enterobacterial common antigen biosynthesis. Catalyzes the acetylation of dTDP-fucosamine (dTDP-4-amino-4,6-dideoxy-D-galactose) to dTDP-Fuc4NAc, which is utilized in the biosynthesis of the enterobacterial common antigen (ECA). This is dTDP-fucosamine acetyltransferase from Escherichia coli O6:H1 (strain CFT073 / ATCC 700928 / UPEC).